A 636-amino-acid polypeptide reads, in one-letter code: Chaperone protein HtpG (636 aa).

The segment at 1-342 is a; substrate-binding; sequence MSSETLEFQA…AHDLSLNISR (342 aa). The interval 343–558 is b; that stretch reads ELLQQDRQIQ…AHDVTPTLEK (216 aa). Residues 559–636 form a c region; the sequence is MYRAMGHEVP…ILAERLARTL (78 aa).

It belongs to the heat shock protein 90 family. Homodimer.

It is found in the cytoplasm. Functionally, molecular chaperone. Has ATPase activity. The sequence is that of Chaperone protein HtpG from Salinispora tropica (strain ATCC BAA-916 / DSM 44818 / JCM 13857 / NBRC 105044 / CNB-440).